The chain runs to 432 residues: Glutamate-1-semialdehyde 2,1-aminomutase 1 (432 aa).

At lysine 268 the chain carries N6-(pyridoxal phosphate)lysine.

Belongs to the class-III pyridoxal-phosphate-dependent aminotransferase family. HemL subfamily. Homodimer. It depends on pyridoxal 5'-phosphate as a cofactor.

The protein resides in the cytoplasm. The enzyme catalyses (S)-4-amino-5-oxopentanoate = 5-aminolevulinate. The protein operates within porphyrin-containing compound metabolism; protoporphyrin-IX biosynthesis; 5-aminolevulinate from L-glutamyl-tRNA(Glu): step 2/2. This Bacillus mycoides (strain KBAB4) (Bacillus weihenstephanensis) protein is Glutamate-1-semialdehyde 2,1-aminomutase 1.